The following is a 365-amino-acid chain: Histidinol-phosphate aminotransferase 2 (365 aa).

An N6-(pyridoxal phosphate)lysine modification is found at Lys221.

The protein belongs to the class-II pyridoxal-phosphate-dependent aminotransferase family. Histidinol-phosphate aminotransferase subfamily. In terms of assembly, homodimer. Requires pyridoxal 5'-phosphate as cofactor.

The catalysed reaction is L-histidinol phosphate + 2-oxoglutarate = 3-(imidazol-4-yl)-2-oxopropyl phosphate + L-glutamate. Its pathway is amino-acid biosynthesis; L-histidine biosynthesis; L-histidine from 5-phospho-alpha-D-ribose 1-diphosphate: step 7/9. This is Histidinol-phosphate aminotransferase 2 (hisC2) from Bradyrhizobium diazoefficiens (strain JCM 10833 / BCRC 13528 / IAM 13628 / NBRC 14792 / USDA 110).